Consider the following 113-residue polypeptide: UPF0122 protein MCAP_0480 (113 aa).

The protein belongs to the UPF0122 family.

Might take part in the signal recognition particle (SRP) pathway. This is inferred from the conservation of its genetic proximity to ftsY/ffh. May be a regulatory protein. The sequence is that of UPF0122 protein MCAP_0480 from Mycoplasma capricolum subsp. capricolum (strain California kid / ATCC 27343 / NCTC 10154).